The primary structure comprises 792 residues: Xaa-Pro dipeptidyl-peptidase (792 aa).

Active-site charge relay system residues include S363, D482, and H513.

The protein belongs to the peptidase S15 family. As to quaternary structure, homodimer.

Its subcellular location is the cytoplasm. It catalyses the reaction Hydrolyzes Xaa-Pro-|- bonds to release unblocked, N-terminal dipeptides from substrates including Ala-Pro-|-p-nitroanilide and (sequentially) Tyr-Pro-|-Phe-Pro-|-Gly-Pro-|-Ile.. In terms of biological role, removes N-terminal dipeptides sequentially from polypeptides having unsubstituted N-termini provided that the penultimate residue is proline. This Lactobacillus delbrueckii subsp. lactis protein is Xaa-Pro dipeptidyl-peptidase (pepX).